Here is a 237-residue protein sequence, read N- to C-terminus: Protein GrpE (237 aa).

2 disordered regions span residues Leu24–Gln56 and Ser204–Ser237.

Belongs to the GrpE family. Homodimer.

The protein localises to the cytoplasm. In terms of biological role, participates actively in the response to hyperosmotic and heat shock by preventing the aggregation of stress-denatured proteins, in association with DnaK and GrpE. It is the nucleotide exchange factor for DnaK and may function as a thermosensor. Unfolded proteins bind initially to DnaJ; upon interaction with the DnaJ-bound protein, DnaK hydrolyzes its bound ATP, resulting in the formation of a stable complex. GrpE releases ADP from DnaK; ATP binding to DnaK triggers the release of the substrate protein, thus completing the reaction cycle. Several rounds of ATP-dependent interactions between DnaJ, DnaK and GrpE are required for fully efficient folding. The chain is Protein GrpE from Synechococcus sp. (strain JA-2-3B'a(2-13)) (Cyanobacteria bacterium Yellowstone B-Prime).